A 145-amino-acid chain; its full sequence is Probable low molecular weight protein-tyrosine-phosphatase EpsP (145 aa).

The active-site Nucleophile is Cys9. Arg15 is an active-site residue. Asp114 (proton donor) is an active-site residue.

The protein belongs to the low molecular weight phosphotyrosine protein phosphatase family.

The enzyme catalyses O-phospho-L-tyrosyl-[protein] + H2O = L-tyrosyl-[protein] + phosphate. The protein operates within glycan metabolism; exopolysaccharide biosynthesis. Functionally, may be involved in assembly or function of the EPS I polymerization/export complex and/or the EpsB ATPase. Alternatively it may function in the removal of the terminal phosphate from C55-isoprenyl pyrophosphate in order to recycle the C55-isoprenyl phosphate lipid carrier used in the synthesis of polysaccharide repeat units. This is Probable low molecular weight protein-tyrosine-phosphatase EpsP (epsP) from Ralstonia solanacearum (Pseudomonas solanacearum).